The following is a 412-amino-acid chain: MSEAESCEETSKEHRIWKKNVPYLYDTVVTKEVEWPSLSVQWMPDVTKTENSDSSMHRMIHGTHTCGGVQNHLMISKFTITTDTPEFDDAKWDSEREEFGGYGEGSAAKWDTEIKINHPGEVHRARYMPHNPFIIASRGPSDDVYIFDYTKHPSEPKDTKFRPQLRLKGHEGEGYGMSWSNTREGHLLTAGDDGMICHWDINANQTISGQIVPQSKFKGHSSNAEDVSFHALHNFVFGSVGDDRKLNLWDLRQSKPQLTAVGHTAEVNCITFNPFSEYILATGSVDKTVALWDMRNMRKKMYTLKHHNDEIFQVSFSPHYETVLASSGSDDRVIVWDISKIQDPSSSSAASSDSVPPEVIFIHAGHTGKVADFSWNPNRPWTICSSDEFNALQVWEVSNSLVSSEKWETEMI.

6 WD repeats span residues 117 to 157 (NHPG…SEPK), 169 to 209 (GHEG…TISG), 219 to 259 (GHSS…PQLT), 262 to 302 (GHTA…KKMY), 306 to 346 (HHND…DPSS), and 365 to 405 (GHTG…VSSE).

It belongs to the WD repeat RBAP46/RBAP48/MSI1 family. As to quaternary structure, binds directly to helix 1 of the histone fold of histone H4, a region that is not accessible when H4 is in chromatin. Interacts with zft-11; the interaction is required to suppress the activation of non-neuronal genes in neurons.

The protein localises to the nucleus. Core histone-binding subunit that may target chromatin assembly factors, chromatin remodeling factors and histone deacetylases to their histone substrates in a manner that is regulated by nucleosomal DNA. Plays a role in regulating cell cycle progression. Required to repress the induction of vulval development by Ras signaling. In association with the zinc finger protein ztf-11, negatively regulates the expression of non-neuronal genes during neurogenesis. The protein is Probable histone-binding protein rba-1 of Caenorhabditis elegans.